Here is a 125-residue protein sequence, read N- to C-terminus: UPF0738 protein GTNG_0708 (125 aa).

It belongs to the UPF0738 family.

The sequence is that of UPF0738 protein GTNG_0708 from Geobacillus thermodenitrificans (strain NG80-2).